A 396-amino-acid chain; its full sequence is Elongation factor Tu (396 aa).

Residues 10–206 (KPHVNVGTIG…ALDTYIPTPE (197 aa)) enclose the tr-type G domain. The segment at 19 to 26 (GHVDHGKT) is G1. 19–26 (GHVDHGKT) contributes to the GTP binding site. Mg(2+) is bound at residue Thr-26. The segment at 60–64 (GITIN) is G2. Residues 81-84 (DCPG) are G3. GTP is bound by residues 81–85 (DCPGH) and 136–139 (NKAD). The tract at residues 136-139 (NKAD) is G4. Residues 174–176 (SAK) form a G5 region.

It belongs to the TRAFAC class translation factor GTPase superfamily. Classic translation factor GTPase family. EF-Tu/EF-1A subfamily. In terms of assembly, monomer.

It localises to the cytoplasm. The enzyme catalyses GTP + H2O = GDP + phosphate + H(+). Its function is as follows. GTP hydrolase that promotes the GTP-dependent binding of aminoacyl-tRNA to the A-site of ribosomes during protein biosynthesis. In Bordetella bronchiseptica (strain ATCC BAA-588 / NCTC 13252 / RB50) (Alcaligenes bronchisepticus), this protein is Elongation factor Tu.